A 525-amino-acid chain; its full sequence is MATLLRSLALFKRNKDKPPITSGSGGAIRGIKHIIIVPIPGDSSITTRSRLLDRLVRLIGNPDVSGPKLTGALIGILSLFVESPGQLIQRITDDPDVSIRLLEVVQSDQSQSGLTFASRGTNMEDEADQYFSHDDPISSDQSRFGWFENKEISDIEVQDPEGFNMILGTILAQIWVLVAKAVTAPDTAADSELRRWIKYTQQRRVVGEFRLERKWLDVVRNRIAEDLSLRRFMVALILDIKRTPGNKPRIAEMICNIDTYIVEAGLASFILTIKFGIETMYPALGLHEFDGELSTLESLMNLYQQMGETAPYMVILENSIQNKFSAGSYPLLWSYAMGVGVELENSMGGLNFGRSYFDPAYFRLGQEMVRRSAGKVSSTLASELGITAEDARLVSEIAMHTTEDKISRAVGPRQAQVSFLHGDQSENELPRLGGKEDRRVKQSRGEARESYRETGPSRASDARAAHLPTGTPLDIDTASESSQDPQDSRRSADALLRLQAMAGISEEQGSDTDTPIVYNDRNLLD.

A homomultimerization region spans residues 1-36; it reads MATLLRSLALFKRNKDKPPITSGSGGAIRGIKHIII. Positions 1-375 are RNA packaging and organization of the helical nucleocapsid; that stretch reads MATLLRSLAL…QEMVRRSAGK (375 aa). A ncore region spans residues 1–403; that stretch reads MATLLRSLAL…VSEIAMHTTE (403 aa). Positions 70-77 match the Nuclear localization signal motif; it reads TGALIGIL. 4 residues coordinate RNA: Lys-180, Arg-195, Gln-202, and Tyr-260. Thr-279 is modified (phosphothreonine; by host). Asn-351 serves as a coordination point for RNA. The segment at 373 to 391 is homomultimerization; the sequence is AGKVSSTLASELGITAEDA. 2 ntail regions span residues 401–525 and 404–525; these read TTED…NLLD and DKIS…NLLD. Positions 418–525 are disordered; it reads SFLHGDQSEN…IVYNDRNLLD (108 aa). Residues 425–440 carry the Nuclear export signal motif; that stretch reads SENELPRLGGKEDRRV. A compositionally biased stretch (basic and acidic residues) spans 433–452; that stretch reads GGKEDRRVKQSRGEARESYR. The interval 477 to 505 is interaction with the phosphoprotein; that stretch reads TASESSQDPQDSRRSADALLRLQAMAGIS.

This sequence belongs to the paramyxoviruses nucleocapsid family. As to quaternary structure, homomultimer; forms the nucleocapsid. Binds to viral genomic RNA. N0 interacts (via Ncore) with the phosphoprotein (via N-terminus); this interaction allows P to chaperon N0 to avoid N polymerization and non-specific RNA binding before encapsidation. Interacts (via the Ntail) as N-RNA template with the phosphoprotein (via C-terminus XD); this interaction maintains the P/L complex anchored to the nucleocapsid template during the sequential transcription. Interacts with the phosphoprotein; this interaction leads to the formation of membraneless organelles that function as viral replication factories. Interacts with human FCGR2B protein. Ntail binds to a protein on human thymic epithelial cells, termed Nucleoprotein Receptor (NR), inducing growth arrest. Interacts with human PPIA/CYPA and PPIB/CYPB. Phosphorylation at Thr-279 is required for the formation of the nucleocapsid.

Its subcellular location is the virion. The protein localises to the host cytoplasm. It localises to the host nucleus. Functionally, forms the helical nucleocapsid (NC) in a ratio of 1 N per 6 ribonucleotides, protecting the genome from nucleases. The nucleocapsid (NC) has a helical structure with either 12.35 or 11.64 N per turn, approximately 20 nm in diameter, with a hollow central cavity approximately 5 nm in diameter. The encapsidated genomic RNA serves as template for transcription and replication; encapsidation by N is coupled to RNA synthesis. Forms the encapsidation complex with the phosphoprotein protein P. Before encapsidation, the newly synthesized free N protein, so-called N0, is chaperoned by P. Participates, together with P, in the formation of viral factories (viroplasms), which are large inclusions in the host cytoplasm where replication takes place. N is released in the blood following lysis of measles infected cells, it interacts then with human FCGR2B on immune cells, inducing apoptosis and blocking inflammatory immune response. The polypeptide is Nucleoprotein (N) (Homo sapiens (Human)).